A 299-amino-acid chain; its full sequence is Ribosomal protein L11 methyltransferase (299 aa).

Residues Thr139, Gly166, Asp188, and Asn231 each coordinate S-adenosyl-L-methionine.

It belongs to the methyltransferase superfamily. PrmA family.

The protein localises to the cytoplasm. The enzyme catalyses L-lysyl-[protein] + 3 S-adenosyl-L-methionine = N(6),N(6),N(6)-trimethyl-L-lysyl-[protein] + 3 S-adenosyl-L-homocysteine + 3 H(+). Its function is as follows. Methylates ribosomal protein L11. This is Ribosomal protein L11 methyltransferase from Thermosynechococcus vestitus (strain NIES-2133 / IAM M-273 / BP-1).